Here is an 85-residue protein sequence, read N- to C-terminus: Large ribosomal subunit protein bL27 (85 aa).

The tract at residues methionine 1–glycine 22 is disordered.

Belongs to the bacterial ribosomal protein bL27 family.

This is Large ribosomal subunit protein bL27 from Sulfurimonas denitrificans (strain ATCC 33889 / DSM 1251) (Thiomicrospira denitrificans (strain ATCC 33889 / DSM 1251)).